The following is a 284-amino-acid chain: 2-dehydro-3-deoxyphosphooctonate aldolase (284 aa).

The protein belongs to the KdsA family.

The protein resides in the cytoplasm. It catalyses the reaction D-arabinose 5-phosphate + phosphoenolpyruvate + H2O = 3-deoxy-alpha-D-manno-2-octulosonate-8-phosphate + phosphate. The protein operates within carbohydrate biosynthesis; 3-deoxy-D-manno-octulosonate biosynthesis; 3-deoxy-D-manno-octulosonate from D-ribulose 5-phosphate: step 2/3. It participates in bacterial outer membrane biogenesis; lipopolysaccharide biosynthesis. This is 2-dehydro-3-deoxyphosphooctonate aldolase from Haemophilus influenzae (strain 86-028NP).